The sequence spans 89 residues: Small ribosomal subunit protein uS17 (89 aa).

It belongs to the universal ribosomal protein uS17 family. As to quaternary structure, part of the 30S ribosomal subunit.

Functionally, one of the primary rRNA binding proteins, it binds specifically to the 5'-end of 16S ribosomal RNA. This Polaromonas sp. (strain JS666 / ATCC BAA-500) protein is Small ribosomal subunit protein uS17.